Reading from the N-terminus, the 120-residue chain is Large ribosomal subunit protein bL19 (120 aa).

Belongs to the bacterial ribosomal protein bL19 family.

In terms of biological role, this protein is located at the 30S-50S ribosomal subunit interface and may play a role in the structure and function of the aminoacyl-tRNA binding site. The sequence is that of Large ribosomal subunit protein bL19 from Thermodesulfovibrio yellowstonii (strain ATCC 51303 / DSM 11347 / YP87).